The following is a 136-amino-acid chain: Class I hydrophobin A (136 aa).

The signal sequence occupies residues 1–16 (MRFALAITTLIAAVTA). 4 disulfides stabilise this stretch: Cys39–Cys109, Cys47–Cys103, Cys48–Cys85, and Cys110–Cys128.

This sequence belongs to the fungal hydrophobin family. In terms of tissue distribution, expressed in aerial conidia, in vitro blastospores, submerged conidia, and cells sporulating on chitin and insect cuticle, with hyd1 expression peaking in growing mycelia.

The protein resides in the secreted. It localises to the cell wall. The protein localises to the spore coat. Its subcellular location is the vacuole. It is found in the cytoplasmic vesicle. Its function is as follows. Aerial growth, conidiation, and dispersal of filamentous fungi in the environment rely upon a capability of their secreting small amphipathic proteins called hydrophobins (HPBs) with low sequence identity. Class I can self-assemble into an outermost layer of rodlet bundles on aerial cell surfaces, conferring cellular hydrophobicity that supports fungal growth, development and dispersal; whereas Class II form highly ordered films at water-air interfaces through intermolecular interactions but contribute nothing to the rodlet structure. Hyd1A contributes to certain cell wall-related features, such as hydrophobicity but is not involved in cell wall-related events during fungal proliferation in host hemocoel. Hyd1A and hyd1B coregulate the formation, morphology and orderly assembly of rodlet bundles required for conidial hydrophobicity and infectivity. Contributes to the spore coat rodlet layer. The polypeptide is Class I hydrophobin A (Beauveria bassiana (strain ARSEF 2860) (White muscardine disease fungus)).